The primary structure comprises 227 residues: NADH-quinone oxidoreductase subunit C (227 aa).

Belongs to the complex I 30 kDa subunit family. In terms of assembly, NDH-1 is composed of 14 different subunits. Subunits NuoB, C, D, E, F, and G constitute the peripheral sector of the complex.

It localises to the cell inner membrane. It carries out the reaction a quinone + NADH + 5 H(+)(in) = a quinol + NAD(+) + 4 H(+)(out). Functionally, NDH-1 shuttles electrons from NADH, via FMN and iron-sulfur (Fe-S) centers, to quinones in the respiratory chain. The immediate electron acceptor for the enzyme in this species is believed to be ubiquinone. Couples the redox reaction to proton translocation (for every two electrons transferred, four hydrogen ions are translocated across the cytoplasmic membrane), and thus conserves the redox energy in a proton gradient. This Legionella pneumophila (strain Paris) protein is NADH-quinone oxidoreductase subunit C.